Here is a 149-residue protein sequence, read N- to C-terminus: Transcriptional repressor NrdR (149 aa).

A zinc finger spans residues 3–34 (CPFCFAVDTKVIDSRLVGEGSSVRRRRQCLVC). Positions 49–139 (PRVIKSNDVR…VYRSFEDIKD (91 aa)) constitute an ATP-cone domain.

The protein belongs to the NrdR family. The cofactor is Zn(2+).

In terms of biological role, negatively regulates transcription of bacterial ribonucleotide reductase nrd genes and operons by binding to NrdR-boxes. This chain is Transcriptional repressor NrdR, found in Salmonella schwarzengrund (strain CVM19633).